The following is a 498-amino-acid chain: ATP synthase subunit beta, chloroplastic (498 aa).

172–179 (GGAGVGKT) serves as a coordination point for ATP.

This sequence belongs to the ATPase alpha/beta chains family. F-type ATPases have 2 components, CF(1) - the catalytic core - and CF(0) - the membrane proton channel. CF(1) has five subunits: alpha(3), beta(3), gamma(1), delta(1), epsilon(1). CF(0) has four main subunits: a(1), b(1), b'(1) and c(9-12).

It is found in the plastid. Its subcellular location is the chloroplast thylakoid membrane. It carries out the reaction ATP + H2O + 4 H(+)(in) = ADP + phosphate + 5 H(+)(out). In terms of biological role, produces ATP from ADP in the presence of a proton gradient across the membrane. The catalytic sites are hosted primarily by the beta subunits. This is ATP synthase subunit beta, chloroplastic from Nicotiana tomentosiformis (Tobacco).